The primary structure comprises 278 residues: Adenylate kinase (278 aa).

50 to 55 (GAGKGT) serves as a coordination point for ATP. The NMP stretch occupies residues 70 to 99 (ATGDMLRAQVAKGTALGKQAKKIMNEGGLV). Residues threonine 71, arginine 76, 97–99 (GLV), 126–129 (GFPR), and glutamine 133 each bind AMP. The tract at residues 167-204 (GRLVHPASGRSYHRIFNPPKDDMKDDITGEPLVQRSDD) is LID. Residues arginine 168 and 177–178 (SY) each bind ATP. Positions 201 and 212 each coordinate AMP. Glutamine 240 serves as a coordination point for ATP.

The protein belongs to the adenylate kinase family. AK2 subfamily. As to quaternary structure, monomer.

The protein resides in the cytoplasm. It localises to the cytosol. The protein localises to the mitochondrion intermembrane space. The catalysed reaction is AMP + ATP = 2 ADP. In terms of biological role, catalyzes the reversible transfer of the terminal phosphate group between ATP and AMP. Plays an important role in cellular energy homeostasis and in adenine nucleotide metabolism. Adenylate kinase activity is critical for regulation of the phosphate utilization and the AMP de novo biosynthesis pathways. The protein is Adenylate kinase (adk-1) of Neurospora crassa (strain ATCC 24698 / 74-OR23-1A / CBS 708.71 / DSM 1257 / FGSC 987).